A 550-amino-acid chain; its full sequence is Chaperonin GroEL (550 aa).

ATP is bound by residues 30–33, Lys-51, 87–91, Gly-415, and Asp-496; these read TLGP and DGTTT. Residues 528 to 550 are disordered; sequence EGGDMPAMPPGGMGGMGGMGGMM. Over residues 538-550 the composition is skewed to gly residues; it reads GGMGGMGGMGGMM.

The protein belongs to the chaperonin (HSP60) family. Forms a cylinder of 14 subunits composed of two heptameric rings stacked back-to-back. Interacts with the co-chaperonin GroES.

The protein resides in the cytoplasm. It catalyses the reaction ATP + H2O + a folded polypeptide = ADP + phosphate + an unfolded polypeptide.. In terms of biological role, together with its co-chaperonin GroES, plays an essential role in assisting protein folding. The GroEL-GroES system forms a nano-cage that allows encapsulation of the non-native substrate proteins and provides a physical environment optimized to promote and accelerate protein folding. This is Chaperonin GroEL from Chlorobium phaeobacteroides (strain BS1).